Reading from the N-terminus, the 238-residue chain is Ribonuclease PH (238 aa).

The interval 66 to 88 (LPRSTHTRSDREAARGKQSGRTQ) is disordered. Phosphate contacts are provided by residues arginine 86 and 124 to 126 (GTR).

It belongs to the RNase PH family. In terms of assembly, homohexameric ring arranged as a trimer of dimers.

It catalyses the reaction tRNA(n+1) + phosphate = tRNA(n) + a ribonucleoside 5'-diphosphate. In terms of biological role, phosphorolytic 3'-5' exoribonuclease that plays an important role in tRNA 3'-end maturation. Removes nucleotide residues following the 3'-CCA terminus of tRNAs; can also add nucleotides to the ends of RNA molecules by using nucleoside diphosphates as substrates, but this may not be physiologically important. Probably plays a role in initiation of 16S rRNA degradation (leading to ribosome degradation) during starvation. The polypeptide is Ribonuclease PH (Ralstonia pickettii (strain 12J)).